Reading from the N-terminus, the 61-residue chain is Type IV secretion system protein PtlI homolog (61 aa).

An N-terminal signal peptide occupies residues M1 to A25. The tract at residues P37–P61 is disordered. Residues Q52–P61 show a composition bias toward polar residues.

The sequence is that of Type IV secretion system protein PtlI homolog (ptlI) from Bordetella parapertussis (strain 12822 / ATCC BAA-587 / NCTC 13253).